Here is a 630-residue protein sequence, read N- to C-terminus: Elongation factor 4 (630 aa).

The disordered stretch occupies residues 1 to 22 (MTVARNRAGAGPGKGSPISSFA). The tr-type G domain occupies 30–211 (ARIRNFCIIA…EVVRQVPAPV (182 aa)). Residues 42 to 47 (DHGKST) and 158 to 161 (NKID) contribute to the GTP site.

This sequence belongs to the TRAFAC class translation factor GTPase superfamily. Classic translation factor GTPase family. LepA subfamily.

It is found in the cell membrane. It carries out the reaction GTP + H2O = GDP + phosphate + H(+). Required for accurate and efficient protein synthesis under certain stress conditions. May act as a fidelity factor of the translation reaction, by catalyzing a one-codon backward translocation of tRNAs on improperly translocated ribosomes. Back-translocation proceeds from a post-translocation (POST) complex to a pre-translocation (PRE) complex, thus giving elongation factor G a second chance to translocate the tRNAs correctly. Binds to ribosomes in a GTP-dependent manner. This chain is Elongation factor 4, found in Rhodococcus jostii (strain RHA1).